The sequence spans 444 residues: Methylenetetrahydrofolate--tRNA-(uracil-5-)-methyltransferase TrmFO (444 aa).

10-15 (GAGLAG) contributes to the FAD binding site.

Belongs to the MnmG family. TrmFO subfamily. It depends on FAD as a cofactor.

The protein localises to the cytoplasm. The enzyme catalyses uridine(54) in tRNA + (6R)-5,10-methylene-5,6,7,8-tetrahydrofolate + NADH + H(+) = 5-methyluridine(54) in tRNA + (6S)-5,6,7,8-tetrahydrofolate + NAD(+). It carries out the reaction uridine(54) in tRNA + (6R)-5,10-methylene-5,6,7,8-tetrahydrofolate + NADPH + H(+) = 5-methyluridine(54) in tRNA + (6S)-5,6,7,8-tetrahydrofolate + NADP(+). Its function is as follows. Catalyzes the folate-dependent formation of 5-methyl-uridine at position 54 (M-5-U54) in all tRNAs. In Streptococcus pneumoniae (strain ATCC 700669 / Spain 23F-1), this protein is Methylenetetrahydrofolate--tRNA-(uracil-5-)-methyltransferase TrmFO.